Consider the following 22-residue polypeptide: Recombination and repair protein (22 aa).

It belongs to the RecA family.

In terms of biological role, important in genetic recombination, DNA repair, and replication. Possesses pairing and strand-transfer activity. Interacts with dda and gene 32 proteins. This is Recombination and repair protein (UVSX) from Escherichia coli (Bacteriophage T2).